The primary structure comprises 169 residues: Probable phospholipid hydroperoxide glutathione peroxidase (169 aa).

Cys43 is a catalytic residue.

The protein belongs to the glutathione peroxidase family. Germinating seed, apex, flower, as well as in stressed tissues.

The protein resides in the cytoplasm. The catalysed reaction is a hydroperoxy polyunsaturated fatty acid + 2 glutathione = a hydroxy polyunsaturated fatty acid + glutathione disulfide + H2O. In terms of biological role, protects cells and enzymes from oxidative damage, by catalyzing the reduction of hydrogen peroxide, lipid peroxides and organic hydroperoxide, by glutathione. The sequence is that of Probable phospholipid hydroperoxide glutathione peroxidase from Nicotiana sylvestris (Wood tobacco).